A 280-amino-acid chain; its full sequence is 3-methyl-2-oxobutanoate hydroxymethyltransferase (280 aa).

Aspartate 60 and aspartate 99 together coordinate Mg(2+). 3-methyl-2-oxobutanoate-binding positions include 60–61 (DS), aspartate 99, and lysine 129. Position 131 (glutamate 131) interacts with Mg(2+). The Proton acceptor role is filled by glutamate 198.

Belongs to the PanB family. In terms of assembly, homodecamer; pentamer of dimers. It depends on Mg(2+) as a cofactor.

It localises to the cytoplasm. The enzyme catalyses 3-methyl-2-oxobutanoate + (6R)-5,10-methylene-5,6,7,8-tetrahydrofolate + H2O = 2-dehydropantoate + (6S)-5,6,7,8-tetrahydrofolate. The protein operates within cofactor biosynthesis; (R)-pantothenate biosynthesis; (R)-pantoate from 3-methyl-2-oxobutanoate: step 1/2. Catalyzes the reversible reaction in which hydroxymethyl group from 5,10-methylenetetrahydrofolate is transferred onto alpha-ketoisovalerate to form ketopantoate. This Thermobifida fusca (strain YX) protein is 3-methyl-2-oxobutanoate hydroxymethyltransferase.